The primary structure comprises 428 residues: Histidine--tRNA ligase (428 aa).

This sequence belongs to the class-II aminoacyl-tRNA synthetase family. In terms of assembly, homodimer.

The protein localises to the cytoplasm. It carries out the reaction tRNA(His) + L-histidine + ATP = L-histidyl-tRNA(His) + AMP + diphosphate + H(+). In Chromohalobacter salexigens (strain ATCC BAA-138 / DSM 3043 / CIP 106854 / NCIMB 13768 / 1H11), this protein is Histidine--tRNA ligase.